The sequence spans 197 residues: LexA repressor (197 aa).

The segment at residues 28 to 47 (VREIARRFRITPRGALLHLI) is a DNA-binding region (H-T-H motif). Active-site for autocatalytic cleavage activity residues include S119 and K156.

The protein belongs to the peptidase S24 family. As to quaternary structure, homodimer.

It catalyses the reaction Hydrolysis of Ala-|-Gly bond in repressor LexA.. Functionally, represses a number of genes involved in the response to DNA damage (SOS response), including recA and lexA. In the presence of single-stranded DNA, RecA interacts with LexA causing an autocatalytic cleavage which disrupts the DNA-binding part of LexA, leading to derepression of the SOS regulon and eventually DNA repair. The protein is LexA repressor of Thermotoga maritima (strain ATCC 43589 / DSM 3109 / JCM 10099 / NBRC 100826 / MSB8).